Consider the following 236-residue polypeptide: uncharacterized protein (236 aa).

A Response regulatory domain is found at 3–116; sequence TCLIVDDELF…RLSKTLKRVR (114 aa). D54 is subject to 4-aspartylphosphate. In terms of domain architecture, HTH LytTR-type spans 135–235; the sequence is LPCYSGSKLK…LKSLKQLFGF (101 aa).

This is an uncharacterized protein from Shewanella oneidensis (strain ATCC 700550 / JCM 31522 / CIP 106686 / LMG 19005 / NCIMB 14063 / MR-1).